We begin with the raw amino-acid sequence, 510 residues long: Histidine ammonia-lyase (510 aa).

The segment at residues 145 to 147 is a cross-link (5-imidazolinone (Ala-Gly)); sequence ASG. Position 146 is a 2,3-didehydroalanine (Ser) (S146).

Belongs to the PAL/histidase family. Contains an active site 4-methylidene-imidazol-5-one (MIO), which is formed autocatalytically by cyclization and dehydration of residues Ala-Ser-Gly.

It localises to the cytoplasm. The enzyme catalyses L-histidine = trans-urocanate + NH4(+). It participates in amino-acid degradation; L-histidine degradation into L-glutamate; N-formimidoyl-L-glutamate from L-histidine: step 1/3. The sequence is that of Histidine ammonia-lyase from Stigmatella aurantiaca.